Consider the following 122-residue polypeptide: MIQMQSTLDVACNSGARRVQCIKVLGGSHRRYAGIGDIIKVSVKEAIPRGKAKKGDVYSAVVVRTKKGVRRPDGSVIRFDRNAAVLLNANNAPIGTRIFGPVTRELRNEQFMKIVSLAPEVL.

It belongs to the universal ribosomal protein uL14 family. As to quaternary structure, part of the 50S ribosomal subunit. Forms a cluster with proteins L3 and L19. In the 70S ribosome, L14 and L19 interact and together make contacts with the 16S rRNA in bridges B5 and B8.

In terms of biological role, binds to 23S rRNA. Forms part of two intersubunit bridges in the 70S ribosome. This Shewanella sediminis (strain HAW-EB3) protein is Large ribosomal subunit protein uL14.